Here is a 160-residue protein sequence, read N- to C-terminus: Cyanate hydratase (160 aa).

Catalysis depends on residues Arg-100, Glu-103, and Ser-126.

It belongs to the cyanase family.

The catalysed reaction is cyanate + hydrogencarbonate + 3 H(+) = NH4(+) + 2 CO2. In terms of biological role, catalyzes the reaction of cyanate with bicarbonate to produce ammonia and carbon dioxide. The polypeptide is Cyanate hydratase (Neosartorya fischeri (strain ATCC 1020 / DSM 3700 / CBS 544.65 / FGSC A1164 / JCM 1740 / NRRL 181 / WB 181) (Aspergillus fischerianus)).